The following is a 134-amino-acid chain: Small ribosomal subunit protein uS8 (134 aa).

It belongs to the universal ribosomal protein uS8 family. As to quaternary structure, part of the 30S ribosomal subunit. Contacts proteins S5 and S12.

Functionally, one of the primary rRNA binding proteins, it binds directly to 16S rRNA central domain where it helps coordinate assembly of the platform of the 30S subunit. The protein is Small ribosomal subunit protein uS8 of Thermosipho africanus (strain TCF52B).